Here is a 114-residue protein sequence, read N- to C-terminus: UPF0102 protein CD630_12710 (114 aa).

The protein belongs to the UPF0102 family.

The sequence is that of UPF0102 protein CD630_12710 from Clostridioides difficile (strain 630) (Peptoclostridium difficile).